The following is a 470-amino-acid chain: tRNA-2-methylthio-N(6)-dimethylallyladenosine synthase (470 aa).

Positions 20-138 (PRVHIETFGC…LPELVERARS (119 aa)) constitute an MTTase N-terminal domain. Residues Cys-29, Cys-65, Cys-99, Cys-176, Cys-180, and Cys-183 each contribute to the [4Fe-4S] cluster site. One can recognise a Radical SAM core domain in the interval 162–398 (REGDLKAWVT…MEVQNRIARA (237 aa)). The 64-residue stretch at 401 to 464 (EARVGKVYDI…TWTLEGELVE (64 aa)) folds into the TRAM domain.

It belongs to the methylthiotransferase family. MiaB subfamily. Monomer. [4Fe-4S] cluster serves as cofactor.

The protein resides in the cytoplasm. The catalysed reaction is N(6)-dimethylallyladenosine(37) in tRNA + (sulfur carrier)-SH + AH2 + 2 S-adenosyl-L-methionine = 2-methylsulfanyl-N(6)-dimethylallyladenosine(37) in tRNA + (sulfur carrier)-H + 5'-deoxyadenosine + L-methionine + A + S-adenosyl-L-homocysteine + 2 H(+). Functionally, catalyzes the methylthiolation of N6-(dimethylallyl)adenosine (i(6)A), leading to the formation of 2-methylthio-N6-(dimethylallyl)adenosine (ms(2)i(6)A) at position 37 in tRNAs that read codons beginning with uridine. This chain is tRNA-2-methylthio-N(6)-dimethylallyladenosine synthase, found in Symbiobacterium thermophilum (strain DSM 24528 / JCM 14929 / IAM 14863 / T).